The primary structure comprises 594 residues: Glutamate decarboxylase 1 (594 aa).

A compositionally biased stretch (low complexity) spans 1–13 (MASSTPSSSATSS). Positions 1-23 (MASSTPSSSATSSNAGADPNTTN) are disordered. S78 bears the Phosphoserine mark. 190–192 (QLS) serves as a coordination point for 4-aminobutanoate. K405 is subject to N6-(pyridoxal phosphate)lysine. R567 serves as a coordination point for 4-aminobutanoate.

This sequence belongs to the group II decarboxylase family. As to quaternary structure, homodimer. Pyridoxal 5'-phosphate serves as cofactor.

It carries out the reaction L-glutamate + H(+) = 4-aminobutanoate + CO2. Its function is as follows. Catalyzes the synthesis of the inhibitory neurotransmitter gamma-aminobutyric acid (GABA) with pyridoxal 5'-phosphate as cofactor. The polypeptide is Glutamate decarboxylase 1 (GAD1) (Pongo abelii (Sumatran orangutan)).